A 217-amino-acid polypeptide reads, in one-letter code: Cytidylate kinase (217 aa).

Residue 10-18 (GPAGAGKST) participates in ATP binding.

It belongs to the cytidylate kinase family. Type 1 subfamily.

Its subcellular location is the cytoplasm. The catalysed reaction is CMP + ATP = CDP + ADP. It catalyses the reaction dCMP + ATP = dCDP + ADP. The sequence is that of Cytidylate kinase from Clostridium botulinum (strain Okra / Type B1).